A 433-amino-acid chain; its full sequence is Trigger factor (433 aa).

The region spanning 161-246 is the PPIase FKBP-type domain; the sequence is EDRVVIDFVG…LKKVENIVLP (86 aa).

The protein belongs to the FKBP-type PPIase family. Tig subfamily.

The protein localises to the cytoplasm. It catalyses the reaction [protein]-peptidylproline (omega=180) = [protein]-peptidylproline (omega=0). In terms of biological role, involved in protein export. Acts as a chaperone by maintaining the newly synthesized protein in an open conformation. Functions as a peptidyl-prolyl cis-trans isomerase. The chain is Trigger factor from Actinobacillus pleuropneumoniae serotype 5b (strain L20).